A 512-amino-acid polypeptide reads, in one-letter code: Gasdermin-E (512 aa).

Residues 1–56 are membrane targeting domain; the sequence is MFAKATRNFLKEVDAGGDLISVSHLNDSDKLQLLSLVTKKKRYWCWQRPKYQILSA. Position 45 is an S-(2-succinyl)cysteine (Cys-45). Lys-120 is covalently cross-linked (Glycyl lysine isopeptide (Lys-Gly) (interchain with G-Cter in ubiquitin)). S-(2-succinyl)cysteine is present on residues Cys-156, Cys-168, and Cys-180. Lys-189 participates in a covalent cross-link: Glycyl lysine isopeptide (Lys-Gly) (interchain with G-Cter in ubiquitin). S-(2-succinyl)cysteine occurs at positions 235, 411, and 420.

Belongs to the gasdermin family. In terms of assembly, homooligomer; homooligomeric ring-shaped pore complex containing 27-28 subunits when inserted in the membrane. Cleavage at Asp-270 by CASP3 (mature and uncleaved precursor forms) or granzyme B (GZMB) relieves autoinhibition and is sufficient to initiate pyroptosis. In terms of processing, succination by the Krebs cycle intermediate fumarate, which leads to S-(2-succinyl)cysteine residues, inhibits processing by caspases, and ability to initiate pyroptosis. Succination modification is catalyzed by a non-enzymatic reaction caused by an accumulation of fumarate. Post-translationally, ubiquitinated on Lys-120 and Lys-189 via 'Lys-48'-linked polyubiquitin chains, leading to proteasomal degradation. Deubiquitinated by USP48, leading to increased stability. Palmitoylated. In terms of tissue distribution, expressed in spleen, kidney, large and small intestine, testicle, stomach and by CD4(+)CD(8+) T cells in thymus. Expressed by macrophages.

It is found in the cell membrane. The protein resides in the cytoplasm. Its subcellular location is the cytosol. Its activity is regulated as follows. The full-length protein before cleavage is inactive: intramolecular interactions between N- and C-terminal domains mediate autoinhibition in the absence of activation signal. The intrinsic pyroptosis-inducing activity is carried by the released N-terminal moiety (Gasdermin-E, N-terminal) following cleavage by CASP3 or granzyme B (GZMB). Activated by NLRP1 in the absence of GSDMD expression: NLRP1 cleaves and activates CASP8, promoting downstream activation of CASP3 and subsequent activation of GSDME. In terms of biological role, precursor of a pore-forming protein that converts non-inflammatory apoptosis to pyroptosis. This form constitutes the precursor of the pore-forming protein: upon cleavage, the released N-terminal moiety (Gasdermin-E, N-terminal) binds to membranes and forms pores, triggering pyroptosis. Pore-forming protein produced by cleavage by CASP3 or granzyme B (GZMB), which converts non-inflammatory apoptosis to pyroptosis or promotes granzyme-mediated pyroptosis, respectively. After cleavage, moves to the plasma membrane, homooligomerizes within the membrane and forms pores of 10-15 nanometers (nm) of inner diameter, allowing the release of mature interleukins (IL1B and IL16) and triggering pyroptosis. Binds to inner leaflet lipids, bisphosphorylated phosphatidylinositols, such as phosphatidylinositol (4,5)-bisphosphate. Cleavage by CASP3 switches CASP3-mediated apoptosis induced by TNF or danger signals, such as chemotherapy drugs, to pyroptosis. Mediates secondary necrosis downstream of the mitochondrial apoptotic pathway and CASP3 activation as well as in response to viral agents. Exhibits bactericidal activity. Cleavage by GZMB promotes tumor suppressor activity by triggering robust anti-tumor immunity. Suppresses tumors by mediating granzyme-mediated pyroptosis in target cells of natural killer (NK) cells: cleavage by granzyme B (GZMB), delivered to target cells from NK-cells, triggers pyroptosis of tumor cells and tumor suppression. May play a role in the p53/TP53-regulated cellular response to DNA damage. The chain is Gasdermin-E from Mus musculus (Mouse).